The following is a 663-amino-acid chain: Probable receptor-like protein kinase At1g49730 (663 aa).

The signal sequence occupies residues 1 to 25 (MVVNSQAFLLALIALLATQLPSLMA). At 26-254 (ADCPLDFSGS…TNPYHLTMVP (229 aa)) the chain is on the extracellular side. Asparagine 36, asparagine 46, asparagine 70, asparagine 101, and asparagine 171 each carry an N-linked (GlcNAc...) asparagine glycan. The interval 213–243 (SFSPVASPEPSPSTVGGISPSNSDSQMTTSR) is disordered. Residues 224 to 243 (PSTVGGISPSNSDSQMTTSR) show a composition bias toward polar residues. The chain crosses the membrane as a helical span at residues 255 to 275 (TIGIVVTAVALTMLVVLVILI). Topologically, residues 276 to 663 (RRKNRELDES…PHSPINGFSF (388 aa)) are cytoplasmic. The Protein kinase domain occupies 327–609 (NDFNTVIGQG…ESCDPVHSAF (283 aa)). ATP is bound by residues 333 to 341 (IGQGGFGTV) and lysine 355. Residue aspartate 451 is the Proton acceptor of the active site. The segment at 631–663 (RGDSRIFGPSSSTTSRSHYSRSLPHSPINGFSF) is disordered. Positions 640 to 652 (SSSTTSRSHYSRS) are enriched in low complexity.

The protein belongs to the protein kinase superfamily. Ser/Thr protein kinase family.

The protein localises to the cell membrane. It carries out the reaction L-seryl-[protein] + ATP = O-phospho-L-seryl-[protein] + ADP + H(+). The enzyme catalyses L-threonyl-[protein] + ATP = O-phospho-L-threonyl-[protein] + ADP + H(+). The polypeptide is Probable receptor-like protein kinase At1g49730 (Arabidopsis thaliana (Mouse-ear cress)).